The chain runs to 1644 residues: Terminal uridylyltransferase 4 (1644 aa).

Disordered stretches follow at residues 31–63 (NQTL…QNDI), 96–168 (CKAK…SLLL), and 205–257 (ALQN…EMDY). Over residues 36 to 46 (ARNDKSVKEIE) the composition is skewed to basic and acidic residues. Phosphoserine is present on S104. Residues 112–125 (TISQAKSEKATSLQ) show a composition bias toward polar residues. Phosphoserine is present on residues S134 and S156. The segment covering 206 to 222 (LQNSPRSQKQQTCTDNT) has biased composition (polar residues). The span at 238 to 252 (DLSKMKNDESNKENS) shows a compositional bias: basic and acidic residues. A required for interaction with LIN28A and pre-let-7 RNA region spans residues 253-333 (SEMDYLENAT…KEKRHKKNIL (81 aa)). The Zn(2+) site is built by C306, C309, H322, and H328. A disordered region spans residues 579-617 (EKNSIAEENKAKADQPKDDTKKTETDNQSNAMKEKHGKS). The segment covering 582 to 603 (SIAEENKAKADQPKDDTKKTET) has biased composition (basic and acidic residues). One can recognise a PAP-associated 1 domain in the interval 628-678 (SLGQLWLELLKFYTLDFALEEYVICVRIQDILTRENKNWPKRRIAIEDPFS). A disordered region spans residues 794–816 (GQDSSSLSTSKSSEIEPKLDKKQ). Positions 806–816 (SEIEPKLDKKQ) are enriched in basic and acidic residues. A sufficient for monouridylation activity region spans residues 901-1634 (DKFILTSGKP…CATRRCRERC (734 aa)). The segment at 913-930 (IVCSICKKDGHSKNDCPE) adopts a CCHC-type 1 zinc-finger fold. Residues 998 to 1001 (SSKN), 1008 to 1011 (SDLD), N1081, K1103, 1121 to 1125 (SYAYI), and H1237 each bind UTP. Mg(2+) is bound by residues D1009 and D1011. A PAP-associated 2 domain is found at 1184–1237 (SLGELWLGLLRFYTEEFDFKEYVISIRQKKLLTTFEKQWTSKCIAIEDPFDLNH). A CCHC-type 2 zinc finger spans residues 1293-1310 (RCCRVCGKIGHYMKDCPK). Residues 1321–1348 (KDSEEEKEGNEEEKDSRDVLDPRDLHDT) form a disordered region. A compositionally biased stretch (basic and acidic residues) spans 1334–1348 (KDSRDVLDPRDLHDT). A CCHC-type 3 zinc finger spans residues 1357–1374 (LRCFICGDAGHVRRECPE). The segment covering 1401-1426 (AGSAQQQGDQSIRTRQSSECSESPSY) has biased composition (low complexity). Residues 1401-1482 (AGSAQQQGDQ…LYNFPQSPPA (82 aa)) form a disordered region. Residues 1441-1452 (AAITQPSSQPGS) are compositionally biased toward polar residues. The segment covering 1453-1470 (QPKLGPPQQGAQPPHQVQ) has biased composition (low complexity). Position 1624 is an omega-N-methylarginine (R1624).

Belongs to the DNA polymerase type-B-like family. As to quaternary structure, interacts with LIN28A in the presence of pre-let-7 RNA. Interacts with T2BP. Interacts with MOV10; the interaction is RNA-dependent. Mg(2+) is required as a cofactor. The cofactor is Mn(2+).

Its subcellular location is the nucleus. It is found in the cytoplasm. The protein resides in the cytoplasmic ribonucleoprotein granule. The catalysed reaction is RNA(n) + UTP = RNA(n)-3'-uridine ribonucleotide + diphosphate. Functionally, uridylyltransferase that mediates the terminal uridylation of mRNAs with short (less than 25 nucleotides) poly(A) tails, hence facilitating global mRNA decay. Essential for both oocyte maturation and fertility. Through 3' terminal uridylation of mRNA, sculpts, with TUT7, the maternal transcriptome by eliminating transcripts during oocyte growth. Involved in microRNA (miRNA)-induced gene silencing through uridylation of deadenylated miRNA targets. Also functions as an integral regulator of microRNA biogenesis using 3 different uridylation mechanisms. Acts as a suppressor of miRNA biogenesis by mediating the terminal uridylation of some miRNA precursors, including that of let-7 (pre-let-7), miR107, miR-143 and miR-200c. Uridylated miRNAs are not processed by Dicer and undergo degradation. Degradation of pre-let-7 contributes to the maintenance of embryonic stem (ES) cell pluripotency. Also catalyzes the 3' uridylation of miR-26A, a miRNA that targets IL6 transcript. This abrogates the silencing of IL6 transcript, hence promoting cytokine expression. In the absence of LIN28A, TUT7 and TUT4 monouridylate group II pre-miRNAs, which includes most of pre-let7 members, that shapes an optimal 3' end overhang for efficient processing. Adds oligo-U tails to truncated pre-miRNAS with a 5' overhang which may promote rapid degradation of non-functional pre-miRNA species. May also suppress Toll-like receptor-induced NF-kappa-B activation via binding to T2BP. Does not play a role in replication-dependent histone mRNA degradation. Due to functional redundancy between TUT4 and TUT7, the identification of the specific role of each of these proteins is difficult. TUT4 and TUT7 restrict retrotransposition of long interspersed element-1 (LINE-1) in cooperation with MOV10 counteracting the RNA chaperonne activity of L1RE1. TUT7 uridylates LINE-1 mRNAs in the cytoplasm which inhibits initiation of reverse transcription once in the nucleus, whereas uridylation by TUT4 destabilizes mRNAs in cytoplasmic ribonucleoprotein granules. This Homo sapiens (Human) protein is Terminal uridylyltransferase 4.